The chain runs to 556 residues: 2-succinyl-5-enolpyruvyl-6-hydroxy-3-cyclohexene-1-carboxylate synthase (556 aa).

The protein belongs to the TPP enzyme family. MenD subfamily. In terms of assembly, homodimer. Requires Mg(2+) as cofactor. The cofactor is Mn(2+). Thiamine diphosphate serves as cofactor.

It catalyses the reaction isochorismate + 2-oxoglutarate + H(+) = 5-enolpyruvoyl-6-hydroxy-2-succinyl-cyclohex-3-ene-1-carboxylate + CO2. It functions in the pathway quinol/quinone metabolism; 1,4-dihydroxy-2-naphthoate biosynthesis; 1,4-dihydroxy-2-naphthoate from chorismate: step 2/7. Its pathway is quinol/quinone metabolism; menaquinone biosynthesis. Functionally, catalyzes the thiamine diphosphate-dependent decarboxylation of 2-oxoglutarate and the subsequent addition of the resulting succinic semialdehyde-thiamine pyrophosphate anion to isochorismate to yield 2-succinyl-5-enolpyruvyl-6-hydroxy-3-cyclohexene-1-carboxylate (SEPHCHC). This chain is 2-succinyl-5-enolpyruvyl-6-hydroxy-3-cyclohexene-1-carboxylate synthase, found in Salmonella typhimurium (strain LT2 / SGSC1412 / ATCC 700720).